We begin with the raw amino-acid sequence, 381 residues long: Adenylate cyclase (381 aa).

The segment at 1–30 is disordered; it reads MTVDDTGSGADGDGRVDPEPAPDSADPGED. Residues 191–300 form the Guanylate cyclase domain; sequence AVGFADLVGF…TTVNLASRLT (110 aa). Positions 196 and 240 each coordinate Mg(2+).

This sequence belongs to the adenylyl cyclase class-3 family. The cofactor is Mg(2+).

It carries out the reaction ATP = 3',5'-cyclic AMP + diphosphate. This is Adenylate cyclase (cya) from Streptomyces coelicolor (strain ATCC BAA-471 / A3(2) / M145).